The chain runs to 237 residues: uncharacterized protein (237 aa).

The region spanning 4 to 237 (QFLIAHRGYS…VKFQIAAQLY (234 aa)) is the GP-PDE domain.

It to glycerophosphoryl diester phosphodiesterases (EC 3.1.4.46). To M.genitalium MG293.

This is an uncharacterized protein from Mycoplasma pneumoniae (strain ATCC 29342 / M129 / Subtype 1) (Mycoplasmoides pneumoniae).